The sequence spans 288 residues: MKQVEWDDTLWSRWPTWRLVVEEQPGTIEEKIARDQAMGRRVAAGGPPTFRLWVNDPCLVVSRRDIVQGLRRGGDPPREVDGLPIRVRSSGGTAVPHGPGVLQFSLVVPRMDRVGMEEVYRTLCRPVEAVLGQRGWRAEFGRVAGSFCDGAHNLVVNGRKIAGTSQSWKGGLAVPGSRNRGYILAHGTLWVRVDPEQAADWLNDFYEQTIGERPIRARASTSLHLLPGGEGVDVRQVIAETANVLESAMGPQVKLERVRALTDEEISWGREGASETDPRRVAYGVDRP.

In terms of domain architecture, BPL/LPL catalytic spans 44 to 253 (AGGPPTFRLW…VLESAMGPQV (210 aa)). Catalysis depends on C148, which acts as the Acyl-thioester intermediate. Residues 269–288 (GREGASETDPRRVAYGVDRP) form a disordered region. Basic and acidic residues predominate over residues 272-288 (GASETDPRRVAYGVDRP).

It belongs to the octanoyltransferase LipL family.

The enzyme catalyses N(6)-octanoyl-L-lysyl-[glycine-cleavage complex H protein] + L-lysyl-[lipoyl-carrier protein] = N(6)-octanoyl-L-lysyl-[lipoyl-carrier protein] + L-lysyl-[glycine-cleavage complex H protein]. It functions in the pathway protein modification; protein lipoylation via endogenous pathway; protein N(6)-(lipoyl)lysine from octanoyl-[acyl-carrier-protein]. Catalyzes the amidotransfer (transamidation) of the octanoyl moiety from octanoyl-GcvH to the lipoyl domain of the E2 subunit of lipoate-dependent enzymes. The chain is Octanoyl-[GcvH]:protein N-octanoyltransferase from Kyrpidia tusciae (strain DSM 2912 / NBRC 15312 / T2) (Bacillus tusciae).